Here is a 63-residue protein sequence, read N- to C-terminus: DNA-directed RNA polymerase 7 kDa subunit (63 aa).

Belongs to the poxviridae DNA-directed RNA polymerase 7 kDa subunit family. The DNA-dependent RNA polymerase (vRNAP) consists of eight subunits encoded by early viral genes and termed according to their apparent molecular masses Rpo147, Rpo132, Rpo35, Rpo30, Rpo22, Rpo19, Rpo18, and Rpo7. The same holoenzyme, with the addition of the transcription-specificity factor RAP94, is used for early gene expression.

The protein localises to the virion. The enzyme catalyses RNA(n) + a ribonucleoside 5'-triphosphate = RNA(n+1) + diphosphate. Functionally, part of the DNA-dependent RNA polymerase which catalyzes the transcription of viral DNA into RNA using the four ribonucleoside triphosphates as substrates. Responsible for the transcription of early, intermediate and late genes. DNA-dependent RNA polymerase associates with the early transcription factor (ETF), itself composed of OPG118 and OPG134, thereby allowing the early genes transcription. Late transcription, and probably also intermediate transcription, require newly synthesized RNA polymerase. This is DNA-directed RNA polymerase 7 kDa subunit (OPG090) from Monkeypox virus.